Reading from the N-terminus, the 202-residue chain is CASP-like protein 2B1 (202 aa).

At 1 to 29 (MSYLGVGVSPGNVPVYHGSNLKVIDKRVR) the chain is on the cytoplasmic side. Residues 30–50 (LAELVLRCLICGLGVLAAVLV) traverse the membrane as a helical segment. At 51 to 72 (GTDTQVKEIFSIQKKARFTDMK) the chain is on the extracellular side. The helical transmembrane segment at 73-93 (ALVFLVIANGIAAAYSLLQGV) threads the bilayer. Residues 94 to 109 (RCVVGMVRGSALFSKP) are Cytoplasmic-facing. The chain crosses the membrane as a helical span at residues 110–130 (LAWAIFSGDQMMAYLTVAAVA). Topologically, residues 131–164 (AAAQSAVFAKLGQPELQWMKICNMYGKFCNQVGE) are extracellular. The helical transmembrane segment at 165–185 (GIASALLVSVSMVVLSCISAF) threads the bilayer. Topologically, residues 186–202 (SLFRLYGANKGKDCTRW) are cytoplasmic.

The protein belongs to the Casparian strip membrane proteins (CASP) family. Homodimer and heterodimers.

Its subcellular location is the cell membrane. In Ricinus communis (Castor bean), this protein is CASP-like protein 2B1.